A 131-amino-acid chain; its full sequence is Small ribosomal subunit protein uS8 (131 aa).

It belongs to the universal ribosomal protein uS8 family. In terms of assembly, part of the 30S ribosomal subunit. Contacts proteins S5 and S12.

One of the primary rRNA binding proteins, it binds directly to 16S rRNA central domain where it helps coordinate assembly of the platform of the 30S subunit. The protein is Small ribosomal subunit protein uS8 of Novosphingobium aromaticivorans (strain ATCC 700278 / DSM 12444 / CCUG 56034 / CIP 105152 / NBRC 16084 / F199).